Consider the following 255-residue polypeptide: 1-(5-phosphoribosyl)-5-[(5-phosphoribosylamino)methylideneamino] imidazole-4-carboxamide isomerase (255 aa).

D8 (proton acceptor) is an active-site residue. Catalysis depends on D129, which acts as the Proton donor.

Belongs to the HisA/HisF family.

It localises to the cytoplasm. It catalyses the reaction 1-(5-phospho-beta-D-ribosyl)-5-[(5-phospho-beta-D-ribosylamino)methylideneamino]imidazole-4-carboxamide = 5-[(5-phospho-1-deoxy-D-ribulos-1-ylimino)methylamino]-1-(5-phospho-beta-D-ribosyl)imidazole-4-carboxamide. It participates in amino-acid biosynthesis; L-histidine biosynthesis; L-histidine from 5-phospho-alpha-D-ribose 1-diphosphate: step 4/9. The chain is 1-(5-phosphoribosyl)-5-[(5-phosphoribosylamino)methylideneamino] imidazole-4-carboxamide isomerase from Prochlorococcus marinus (strain MIT 9211).